The sequence spans 59 residues: Large ribosomal subunit protein bL32 (59 aa).

The segment at 1–59 is disordered; it reads MAVQQNRKTRSKRGMRRSHDALSAAALSTDATTGEVHRRHHVSPDGFYRGKQVVEARDE. The span at 7-16 shows a compositional bias: basic residues; that stretch reads RKTRSKRGMR. Low complexity predominate over residues 21–33; the sequence is ALSAAALSTDATT.

The protein belongs to the bacterial ribosomal protein bL32 family.

The protein is Large ribosomal subunit protein bL32 of Marinobacter nauticus (strain ATCC 700491 / DSM 11845 / VT8) (Marinobacter aquaeolei).